Reading from the N-terminus, the 160-residue chain is UPF0225 protein PP_1119 (160 aa).

This sequence belongs to the UPF0225 family.

This Pseudomonas putida (strain ATCC 47054 / DSM 6125 / CFBP 8728 / NCIMB 11950 / KT2440) protein is UPF0225 protein PP_1119.